The following is a 247-amino-acid chain: Pyridoxine 5'-phosphate synthase (247 aa).

Position 9 (N9) interacts with 3-amino-2-oxopropyl phosphate. 11–12 lines the 1-deoxy-D-xylulose 5-phosphate pocket; that stretch reads DH. R20 contacts 3-amino-2-oxopropyl phosphate. H45 (proton acceptor) is an active-site residue. Positions 47 and 52 each coordinate 1-deoxy-D-xylulose 5-phosphate. E72 functions as the Proton acceptor in the catalytic mechanism. A 1-deoxy-D-xylulose 5-phosphate-binding site is contributed by T102. Catalysis depends on H193, which acts as the Proton donor. Residues G194 and 215–216 each bind 3-amino-2-oxopropyl phosphate; that span reads GH.

This sequence belongs to the PNP synthase family. As to quaternary structure, homooctamer; tetramer of dimers.

It localises to the cytoplasm. The catalysed reaction is 3-amino-2-oxopropyl phosphate + 1-deoxy-D-xylulose 5-phosphate = pyridoxine 5'-phosphate + phosphate + 2 H2O + H(+). Its pathway is cofactor biosynthesis; pyridoxine 5'-phosphate biosynthesis; pyridoxine 5'-phosphate from D-erythrose 4-phosphate: step 5/5. Functionally, catalyzes the complicated ring closure reaction between the two acyclic compounds 1-deoxy-D-xylulose-5-phosphate (DXP) and 3-amino-2-oxopropyl phosphate (1-amino-acetone-3-phosphate or AAP) to form pyridoxine 5'-phosphate (PNP) and inorganic phosphate. This chain is Pyridoxine 5'-phosphate synthase, found in Blochmanniella floridana.